We begin with the raw amino-acid sequence, 261 residues long: Histone H3-like centromeric protein cpar-1 (261 aa).

A disordered region spans residues threonine 80–arginine 150. Residues alanine 113–arginine 127 show a composition bias toward polar residues. A compositionally biased stretch (low complexity) spans glycine 132–serine 146. The H3-like stretch occupies residues tyrosine 164 to leucine 261.

Belongs to the histone H3 family. Forms a nucleosome-like histone octamer containing two molecules each of H2A, H2B, cpar-1 and H4 assembled in one cpar-1-H4 heterotetramer and two H2A-H2B heterodimers. Post-translationally, cleaved at the onset of meiotic anaphase I, likely by separase sep-1.

It is found in the nucleus. The protein localises to the chromosome. Functionally, histone H3-like variant which exclusively replaces conventional H3 in the nucleosome core of centromeric chromatin at the inner plate of the kinetochore. Required for recruitment and assembly of kinetochore proteins, mitotic progression and chromosome segregation. May serve as an epigenetic mark that propagates centromere identity through replication and cell division. Not required for chromosome segregation during meiosis. This is Histone H3-like centromeric protein cpar-1 from Caenorhabditis elegans.